Consider the following 136-residue polypeptide: NADPH-dependent 7-cyano-7-deazaguanine reductase (136 aa).

Cysteine 50 functions as the Thioimide intermediate in the catalytic mechanism. The active-site Proton donor is aspartate 57. Residues 72–74 (YEL) and 91–92 (HE) contribute to the substrate site.

Belongs to the GTP cyclohydrolase I family. QueF type 1 subfamily.

It localises to the cytoplasm. It catalyses the reaction 7-aminomethyl-7-carbaguanine + 2 NADP(+) = 7-cyano-7-deazaguanine + 2 NADPH + 3 H(+). It functions in the pathway tRNA modification; tRNA-queuosine biosynthesis. Functionally, catalyzes the NADPH-dependent reduction of 7-cyano-7-deazaguanine (preQ0) to 7-aminomethyl-7-deazaguanine (preQ1). In Prochlorococcus marinus (strain MIT 9301), this protein is NADPH-dependent 7-cyano-7-deazaguanine reductase.